The chain runs to 415 residues: Peptide chain release factor subunit 1 (415 aa).

This sequence belongs to the eukaryotic release factor 1 family. As to quaternary structure, heterodimer of two subunits, one of which binds GTP.

It is found in the cytoplasm. In terms of biological role, directs the termination of nascent peptide synthesis (translation) in response to the termination codons UAA, UAG and UGA. This chain is Peptide chain release factor subunit 1, found in Thermococcus onnurineus (strain NA1).